We begin with the raw amino-acid sequence, 412 residues long: Putative membrane protein 337L (412 aa).

Residues N171, N186, N247, and N271 are each glycosylated (N-linked (GlcNAc...) asparagine; by host). The helical transmembrane segment at 387-407 (VLITGIAVTGVAVLLFLLLMF) threads the bilayer.

This sequence belongs to the IIV-6 337L family.

It is found in the virion membrane. In Acheta domesticus (House cricket), this protein is Putative membrane protein 337L.